A 394-amino-acid chain; its full sequence is Elongation factor Tu (394 aa).

One can recognise a tr-type G domain in the interval 10–204 (KPHVNIGTIG…AVDSYIPQPV (195 aa)). Positions 19 to 26 (GHVDHGKT) are G1. 19 to 26 (GHVDHGKT) provides a ligand contact to GTP. Position 26 (Thr26) interacts with Mg(2+). Residues 60 to 64 (GITIS) are G2. Positions 81–84 (DCPG) are G3. Residues 81–85 (DCPGH) and 136–139 (NKVD) each bind GTP. A G4 region spans residues 136–139 (NKVD). Residues 174–176 (SAL) form a G5 region.

It belongs to the TRAFAC class translation factor GTPase superfamily. Classic translation factor GTPase family. EF-Tu/EF-1A subfamily. As to quaternary structure, monomer.

The protein localises to the cytoplasm. It carries out the reaction GTP + H2O = GDP + phosphate + H(+). GTP hydrolase that promotes the GTP-dependent binding of aminoacyl-tRNA to the A-site of ribosomes during protein biosynthesis. The sequence is that of Elongation factor Tu from Rickettsia montanensis.